Consider the following 488-residue polypeptide: Lysine--tRNA ligase (488 aa).

The Mg(2+) site is built by glutamate 398 and glutamate 405.

The protein belongs to the class-II aminoacyl-tRNA synthetase family. In terms of assembly, homodimer. Mg(2+) serves as cofactor.

It localises to the cytoplasm. The catalysed reaction is tRNA(Lys) + L-lysine + ATP = L-lysyl-tRNA(Lys) + AMP + diphosphate. The protein is Lysine--tRNA ligase of Carboxydothermus hydrogenoformans (strain ATCC BAA-161 / DSM 6008 / Z-2901).